Here is a 477-residue protein sequence, read N- to C-terminus: tRNA-2-methylthio-N(6)-dimethylallyladenosine synthase (477 aa).

The region spanning 9–129 is the MTTase N-terminal domain; that stretch reads RKLHIKSYGC…LPQLLARAKT (121 aa). [4Fe-4S] cluster is bound by residues cysteine 18, cysteine 54, cysteine 92, cysteine 170, cysteine 174, and cysteine 177. The 231-residue stretch at 156–386 folds into the Radical SAM core domain; sequence RSRGISAFVT…QLQNLIDSQQ (231 aa). Residues 391 to 453 enclose the TRAM domain; it reads RTALGRTIDV…RYSLFGTLAS (63 aa). The segment at 454–477 is disordered; sequence KPTSGEPSNHAATGGAQFQTTAGA. Positions 464-477 are enriched in low complexity; that stretch reads AATGGAQFQTTAGA.

This sequence belongs to the methylthiotransferase family. MiaB subfamily. Monomer. It depends on [4Fe-4S] cluster as a cofactor.

It localises to the cytoplasm. The enzyme catalyses N(6)-dimethylallyladenosine(37) in tRNA + (sulfur carrier)-SH + AH2 + 2 S-adenosyl-L-methionine = 2-methylsulfanyl-N(6)-dimethylallyladenosine(37) in tRNA + (sulfur carrier)-H + 5'-deoxyadenosine + L-methionine + A + S-adenosyl-L-homocysteine + 2 H(+). Catalyzes the methylthiolation of N6-(dimethylallyl)adenosine (i(6)A), leading to the formation of 2-methylthio-N6-(dimethylallyl)adenosine (ms(2)i(6)A) at position 37 in tRNAs that read codons beginning with uridine. The protein is tRNA-2-methylthio-N(6)-dimethylallyladenosine synthase of Nitrobacter winogradskyi (strain ATCC 25391 / DSM 10237 / CIP 104748 / NCIMB 11846 / Nb-255).